We begin with the raw amino-acid sequence, 64 residues long: Large ribosomal subunit protein bL35 (64 aa).

Basic residues-rich tracts occupy residues 1 to 15 (MPKQ…KRFR) and 23 to 43 (VRQK…RTRR). The tract at residues 1–64 (MPKQKSHSGA…AGRIKRLLAR (64 aa)) is disordered.

The protein belongs to the bacterial ribosomal protein bL35 family.

The sequence is that of Large ribosomal subunit protein bL35 from Frankia alni (strain DSM 45986 / CECT 9034 / ACN14a).